Consider the following 171-residue polypeptide: Small ribosomal subunit protein uS5 (171 aa).

Residues 14–77 (LKEKLVMVNR…EKAKKKLLKI (64 aa)) enclose the S5 DRBM domain.

Belongs to the universal ribosomal protein uS5 family. Part of the 30S ribosomal subunit. Contacts proteins S4 and S8.

Functionally, with S4 and S12 plays an important role in translational accuracy. Its function is as follows. Located at the back of the 30S subunit body where it stabilizes the conformation of the head with respect to the body. The sequence is that of Small ribosomal subunit protein uS5 from Karelsulcia muelleri (strain GWSS) (Sulcia muelleri).